A 320-amino-acid polypeptide reads, in one-letter code: ATP-dependent 6-phosphofructokinase (320 aa).

Residue Gly12 participates in ATP binding. 22-26 (RGVVR) lines the ADP pocket. ATP-binding positions include 73–74 (RF) and 103–106 (GDGS). Asp104 is a Mg(2+) binding site. 126–128 (TID) contacts substrate. The active-site Proton acceptor is the Asp128. Arg155 lines the ADP pocket. Substrate-binding positions include Arg163 and 170 to 172 (MGR). ADP-binding positions include 186–188 (GCE), Lys212, and 214–216 (KKH). Substrate-binding positions include Glu223, Arg244, and 250-253 (HIQR).

The protein belongs to the phosphofructokinase type A (PFKA) family. ATP-dependent PFK group I subfamily. Prokaryotic clade 'B1' sub-subfamily. Homotetramer. Mg(2+) serves as cofactor.

Its subcellular location is the cytoplasm. It catalyses the reaction beta-D-fructose 6-phosphate + ATP = beta-D-fructose 1,6-bisphosphate + ADP + H(+). Its pathway is carbohydrate degradation; glycolysis; D-glyceraldehyde 3-phosphate and glycerone phosphate from D-glucose: step 3/4. With respect to regulation, allosterically activated by ADP and other diphosphonucleosides, and allosterically inhibited by phosphoenolpyruvate. Its function is as follows. Catalyzes the phosphorylation of D-fructose 6-phosphate to fructose 1,6-bisphosphate by ATP, the first committing step of glycolysis. This is ATP-dependent 6-phosphofructokinase from Vibrio cholerae serotype O1 (strain ATCC 39315 / El Tor Inaba N16961).